We begin with the raw amino-acid sequence, 351 residues long: Tetraacyldisaccharide 4'-kinase (351 aa).

61 to 68 (TAGGTGKT) serves as a coordination point for ATP.

The protein belongs to the LpxK family.

The catalysed reaction is a lipid A disaccharide + ATP = a lipid IVA + ADP + H(+). It functions in the pathway glycolipid biosynthesis; lipid IV(A) biosynthesis; lipid IV(A) from (3R)-3-hydroxytetradecanoyl-[acyl-carrier-protein] and UDP-N-acetyl-alpha-D-glucosamine: step 6/6. In terms of biological role, transfers the gamma-phosphate of ATP to the 4'-position of a tetraacyldisaccharide 1-phosphate intermediate (termed DS-1-P) to form tetraacyldisaccharide 1,4'-bis-phosphate (lipid IVA). The protein is Tetraacyldisaccharide 4'-kinase of Xanthomonas campestris pv. campestris (strain 8004).